Consider the following 144-residue polypeptide: MGSKIFLLLGLSIAFAILISSEVAARELAETAAKTEGYNNGGGYHNGGGGYNNGGGYHNGGGGYNNGGGYHNGGGGYNNGGGYHNGGGGYNNGGGHHNGGGGYNNGGGHHGGGGSCYHYCHGRCCSAAEAKALEATTAQVKPQN.

Residues 5 to 25 form a helical membrane-spanning segment; the sequence is IFLLLGLSIAFAILISSEVAA. Repeat copies occupy residues 37–42, 43–48, 50–55, 56–61, 63–68, 69–74, 76–81, 82–87, 89–94, 102–107, and 108–113. Residues 37-113 form an 11 X 6 AA tandem repeats of G-Y-[NH]-N-G -G region; the sequence is GYNNGGGYHN…NNGGGHHGGG (77 aa).

The protein belongs to the GRP family.

It localises to the membrane. The polypeptide is Glycine-rich protein DC9.1 (Daucus carota (Wild carrot)).